Consider the following 365-residue polypeptide: MTLNKVPASEYRRILVNDHPIMDARAPVEFEKGAFPASVNHPLMEDEERKKVGTCYKEHGQETAIKLGHSLVQGEIKQQRVDAWLDFFTKNPDGYLYCFRGGLRSQLTQQWLKEAGLDIPFIEGGYKAMRQFLIETIDNAANVKPMLILSGITGSGKTDFLLQRKEAVDLEGIAHHRGSSFGRYHEGQPSQINFENALAVALLKHQDTDAKHLLLEDESFLIGRSALPQAFYSGMQTASVLVLEESMDARLTRLLNEYVHKMHSGYIQRLGEEAGFEAFAQYLAQSITGIKKRLGGKQHDELQAMITDALSIQTSQNDTRGHLGWIELLLVKYYDPMYQYQIDKKAERILFKGDHQAMHQWLDDH.

Residues 15–138 (LVNDHPIMDA…MRQFLIETID (124 aa)) form the Rhodanese domain. The active-site S-selanylcysteine intermediate is the Cys-98.

It belongs to the SelU family. As to quaternary structure, monomer.

It carries out the reaction 5-methylaminomethyl-2-thiouridine(34) in tRNA + selenophosphate + (2E)-geranyl diphosphate + H2O + H(+) = 5-methylaminomethyl-2-selenouridine(34) in tRNA + (2E)-thiogeraniol + phosphate + diphosphate. The catalysed reaction is 5-methylaminomethyl-2-thiouridine(34) in tRNA + (2E)-geranyl diphosphate = 5-methylaminomethyl-S-(2E)-geranyl-thiouridine(34) in tRNA + diphosphate. The enzyme catalyses 5-methylaminomethyl-S-(2E)-geranyl-thiouridine(34) in tRNA + selenophosphate + H(+) = 5-methylaminomethyl-2-(Se-phospho)selenouridine(34) in tRNA + (2E)-thiogeraniol. It catalyses the reaction 5-methylaminomethyl-2-(Se-phospho)selenouridine(34) in tRNA + H2O = 5-methylaminomethyl-2-selenouridine(34) in tRNA + phosphate. Its function is as follows. Involved in the post-transcriptional modification of the uridine at the wobble position (U34) of tRNA(Lys), tRNA(Glu) and tRNA(Gln). Catalyzes the conversion of 2-thiouridine (S2U-RNA) to 2-selenouridine (Se2U-RNA). Acts in a two-step process involving geranylation of 2-thiouridine (S2U) to S-geranyl-2-thiouridine (geS2U) and subsequent selenation of the latter derivative to 2-selenouridine (Se2U) in the tRNA chain. This is tRNA 2-selenouridine synthase from Shewanella pealeana (strain ATCC 700345 / ANG-SQ1).